The primary structure comprises 335 residues: Glyceraldehyde-3-phosphate dehydrogenase, cytosolic (335 aa).

Residues 13–14, aspartate 35, and arginine 80 each bind NAD(+); that span reads RI. D-glyceraldehyde 3-phosphate-binding positions include 151-153, threonine 182, 211-212, and arginine 234; these read SCT and TG. Catalysis depends on cysteine 152, which acts as the Nucleophile. Asparagine 316 contributes to the NAD(+) binding site.

The protein belongs to the glyceraldehyde-3-phosphate dehydrogenase family. In terms of assembly, homotetramer.

It localises to the cytoplasm. It catalyses the reaction D-glyceraldehyde 3-phosphate + phosphate + NAD(+) = (2R)-3-phospho-glyceroyl phosphate + NADH + H(+). Its pathway is carbohydrate degradation; glycolysis; pyruvate from D-glyceraldehyde 3-phosphate: step 1/5. The polypeptide is Glyceraldehyde-3-phosphate dehydrogenase, cytosolic (GAPC) (Chondrus crispus (Carrageen Irish moss)).